Consider the following 219-residue polypeptide: Uridylate kinase (219 aa).

ATP is bound at residue 9–10 (GS). UMP is bound at residue Gly-41. 2 residues coordinate ATP: Gly-42 and Arg-46. UMP-binding positions include Asp-63 and 110 to 116 (TFPGHTT). ATP contacts are provided by Thr-136, Asn-137, Tyr-142, and Asp-145.

This sequence belongs to the UMP kinase family. Homohexamer.

It is found in the cytoplasm. The enzyme catalyses UMP + ATP = UDP + ADP. It functions in the pathway pyrimidine metabolism; CTP biosynthesis via de novo pathway; UDP from UMP (UMPK route): step 1/1. Inhibited by UTP. Functionally, catalyzes the reversible phosphorylation of UMP to UDP. This Archaeoglobus fulgidus (strain ATCC 49558 / DSM 4304 / JCM 9628 / NBRC 100126 / VC-16) protein is Uridylate kinase.